The primary structure comprises 194 residues: Adenylate kinase (194 aa).

Glycine 10 to threonine 15 is an ATP binding site. An NMP region spans residues serine 30–valine 59. Residues threonine 31, arginine 36, glutamine 57–valine 59, glycine 85–arginine 88, and glutamine 92 each bind AMP. Positions serine 126 to aspartate 142 are LID. Residue arginine 127 coordinates ATP. Arginine 139 and arginine 150 together coordinate AMP. Alanine 178 provides a ligand contact to ATP.

It belongs to the adenylate kinase family. Monomer.

It is found in the cytoplasm. The enzyme catalyses AMP + ATP = 2 ADP. Its pathway is purine metabolism; AMP biosynthesis via salvage pathway; AMP from ADP: step 1/1. Catalyzes the reversible transfer of the terminal phosphate group between ATP and AMP. Plays an important role in cellular energy homeostasis and in adenine nucleotide metabolism. In Brucella melitensis biotype 1 (strain ATCC 23456 / CCUG 17765 / NCTC 10094 / 16M), this protein is Adenylate kinase.